The primary structure comprises 534 residues: NAD(P)H-quinone oxidoreductase chain 4 2 (534 aa).

Transmembrane regions (helical) follow at residues Phe6 to Leu26, Trp38 to Ser58, Leu93 to Phe113, Phe117 to Asp137, Leu138 to Ile158, Phe171 to Phe191, Ile210 to Ile230, Thr245 to Phe265, Phe279 to Phe299, Ile313 to Gly333, Met335 to Thr355, Met377 to Ala399, and Val419 to Met439.

Belongs to the complex I subunit 4 family.

The protein resides in the cellular thylakoid membrane. The catalysed reaction is a plastoquinone + NADH + (n+1) H(+)(in) = a plastoquinol + NAD(+) + n H(+)(out). It catalyses the reaction a plastoquinone + NADPH + (n+1) H(+)(in) = a plastoquinol + NADP(+) + n H(+)(out). In terms of biological role, NDH-1 shuttles electrons from NAD(P)H, via FMN and iron-sulfur (Fe-S) centers, to quinones in the respiratory chain. The immediate electron acceptor for the enzyme in this species is believed to be plastoquinone. Couples the redox reaction to proton translocation (for every two electrons transferred, four hydrogen ions are translocated across the cytoplasmic membrane), and thus conserves the redox energy in a proton gradient. This Synechococcus elongatus (strain ATCC 33912 / PCC 7942 / FACHB-805) (Anacystis nidulans R2) protein is NAD(P)H-quinone oxidoreductase chain 4 2.